An 842-amino-acid polypeptide reads, in one-letter code: Amyloid-beta A4 precursor protein-binding family A member 1 (842 aa).

3 disordered regions span residues 1-121, 238-349, and 366-439; these read MNHL…DESA, RLHH…EKRD, and KTRT…KESR. A Phosphoserine modification is found at Ser-82. Basic and acidic residues-rich tracts occupy residues 106–115 and 240–258; these read DGYEAERAQD and HHYD…KEAE. A phosphoserine mark is found at Ser-246, Ser-250, Ser-252, Ser-267, Ser-284, and Ser-289. A Phosphothreonine modification is found at Thr-309. Ser-317 and Ser-372 each carry phosphoserine. Thr-375 bears the Phosphothreonine mark. Positions 392–403 are enriched in basic and acidic residues; that stretch reads PTRDCDDQRPVD. The segment covering 404–421 has biased composition (low complexity); it reads GDSPSPGSSSPLGAESSS. Phosphoserine occurs at positions 406, 408, 413, and 573. The region spanning 460 to 648 is the PID domain; sequence LIDGIIFAAN…LLNTQDMYND (189 aa). An autoinhibitory helix linker region spans residues 631 to 648; the sequence is LSQKEYSDLLNTQDMYND. 2 PDZ domains span residues 661-746 and 752-828; these read DVFI…NIVR and TVLI…MPAA.

In terms of assembly, part of a multimeric complex containing STXBP1 and STX1A. Interacts with STXBP1. Component of the brain-specific heterotrimeric complex (LIN-10-LIN-2-LIN-7 complex) composed of at least APBA1, CASK, and LIN7, which associates with the motor protein KIF17 to transport vesicles along microtubules. Within the complex, interacts (via PDZ domain) with the motor protein KIF17; the interaction is direct and is required for association of KIF17 with the cargo that is to be transported. Binds to the cytoplasmic domain of amyloid protein (APP). Interacts (via PDZ 1 and 2 domains) with FSPB. Isoform 3 interacts (via its truncated PID domain) with active, GTP-bound RAB6A. Also interacts with GTP-bound RAB6B. In terms of tissue distribution, isoform 3 is expressed in brain.

Its subcellular location is the cytoplasm. The protein resides in the perinuclear region. It is found in the nucleus. The protein localises to the golgi apparatus. In terms of biological role, putative function in synaptic vesicle exocytosis by binding to Munc18-1, an essential component of the synaptic vesicle exocytotic machinery. May modulate processing of the amyloid-beta precursor protein (APP) and hence formation of AAP-beta. Component of the LIN-10-LIN-2-LIN-7 complex, which associates with the motor protein KIF17 to transport vesicles containing N-methyl-D-aspartate (NMDA) receptor subunit NR2B along microtubules. The sequence is that of Amyloid-beta A4 precursor protein-binding family A member 1 from Mus musculus (Mouse).